An 872-amino-acid chain; its full sequence is Leucine--tRNA ligase (872 aa).

The 'HIGH' region signature appears at 42-52 (PYPSGSLHMGH). Positions 634-638 (TMSKS) match the 'KMSKS' region motif. Residue lysine 637 participates in ATP binding.

Belongs to the class-I aminoacyl-tRNA synthetase family.

It localises to the cytoplasm. It carries out the reaction tRNA(Leu) + L-leucine + ATP = L-leucyl-tRNA(Leu) + AMP + diphosphate. The protein is Leucine--tRNA ligase of Nostoc sp. (strain PCC 7120 / SAG 25.82 / UTEX 2576).